The chain runs to 208 residues: Uracil phosphoribosyltransferase (208 aa).

Residues arginine 78, arginine 103, and 130-138 (DPMLATGGS) each bind 5-phospho-alpha-D-ribose 1-diphosphate. Uracil contacts are provided by residues isoleucine 193 and 198-200 (GDA). Aspartate 199 serves as a coordination point for 5-phospho-alpha-D-ribose 1-diphosphate.

The protein belongs to the UPRTase family. Mg(2+) serves as cofactor.

The catalysed reaction is UMP + diphosphate = 5-phospho-alpha-D-ribose 1-diphosphate + uracil. It participates in pyrimidine metabolism; UMP biosynthesis via salvage pathway; UMP from uracil: step 1/1. Allosterically activated by GTP. Catalyzes the conversion of uracil and 5-phospho-alpha-D-ribose 1-diphosphate (PRPP) to UMP and diphosphate. The protein is Uracil phosphoribosyltransferase of Pelobacter propionicus (strain DSM 2379 / NBRC 103807 / OttBd1).